A 188-amino-acid polypeptide reads, in one-letter code: Molybdopterin synthase catalytic subunit (188 aa).

Ser-20 is modified (phosphoserine). Residues 143 to 144 (HR), Lys-159, and 166 to 168 (KKE) contribute to the substrate site.

The protein belongs to the MoaE family. MOCS2B subfamily. In terms of assembly, heterotetramer; composed of 2 small (MOCS2A) and 2 large (MOCS2B) subunits. In terms of tissue distribution, highest levels are found in heart and skeletal muscle. Lower levels are present in brain, kidney and pancreas. Very low levels are found in lung and peripheral blood leukocytes.

It is found in the cytoplasm. Its subcellular location is the cytosol. It catalyses the reaction 2 [molybdopterin-synthase sulfur-carrier protein]-C-terminal-Gly-aminoethanethioate + cyclic pyranopterin phosphate + H2O = molybdopterin + 2 [molybdopterin-synthase sulfur-carrier protein]-C-terminal Gly-Gly + 2 H(+). It participates in cofactor biosynthesis; molybdopterin biosynthesis. Catalytic subunit of the molybdopterin synthase complex, a complex that catalyzes the conversion of precursor Z into molybdopterin. Acts by mediating the incorporation of 2 sulfur atoms from thiocarboxylated MOCS2A into precursor Z to generate a dithiolene group. In Homo sapiens (Human), this protein is Molybdopterin synthase catalytic subunit.